The following is a 263-amino-acid chain: Tryptophan synthase alpha chain (263 aa).

Catalysis depends on proton acceptor residues E49 and D60.

The protein belongs to the TrpA family. As to quaternary structure, tetramer of two alpha and two beta chains.

It catalyses the reaction (1S,2R)-1-C-(indol-3-yl)glycerol 3-phosphate + L-serine = D-glyceraldehyde 3-phosphate + L-tryptophan + H2O. It functions in the pathway amino-acid biosynthesis; L-tryptophan biosynthesis; L-tryptophan from chorismate: step 5/5. Functionally, the alpha subunit is responsible for the aldol cleavage of indoleglycerol phosphate to indole and glyceraldehyde 3-phosphate. This chain is Tryptophan synthase alpha chain, found in Cereibacter sphaeroides (strain ATCC 17029 / ATH 2.4.9) (Rhodobacter sphaeroides).